Here is a 4981-residue protein sequence, read N- to C-terminus: Protocadherin Fat 4 (4981 aa).

An N-terminal signal peptide occupies residues 1-42; the sequence is MNLAANRAPGRRRLPLPSPSLCQLLRVWGLLSLLPGSARVQA. The Extracellular portion of the chain corresponds to 43 to 4505; the sequence is AEQRQVFQVM…PDEISLPLWA (4463 aa). Cadherin domains are found at residues 44-135, 136-250, 251-353, 359-475, 476-582, 584-689, 690-793, 794-893, 894-996, 997-1100, 1101-1210, 1211-1315, 1316-1420, 1421-1529, 1529-1629, 1630-1740, 1741-1841, 1842-1944, 1945-2051, 2051-2154, 2155-2259, 2260-2364, 2365-2468, 2469-2569, 2570-2671, 2672-2775, 2775-2874, 2875-2985, 2986-3091, 3092-3196, 3197-3300, 3301-3406, 3407-3512, and 3511-3622; these read EQRQ…APVF, PDPS…PPVF, GSSH…DPVV, PATS…PPVF, EQQV…KPVF, QPEG…SPVF, YPVQ…PPVF, SQAA…APHF, LQAV…PPVF, DQIS…RPLF, NSTN…APKF, LKDF…TPSF, PKST…PPSF, PPGD…VPMF, FISQ…GPVF, TQTK…PPVF, PTDT…TPRF, SRPV…PPVF, SMSS…PPMF, FLSP…NPVF, AQAM…VPVF, ELSP…VPTF, ANNM…PPRF, QHHP…FPKV, RAKE…APTF, EEDP…APRF, FSQI…TPRF, SRPS…PPQF, LQNK…TPEF, SQNH…SPVF, VPDE…VPRF, VSKL…PPVF, SLST…GPVL, and VLTV…VEIF. Asn84 and Asn237 each carry an N-linked (GlcNAc...) asparagine glycan. Residues Asn393, Asn416, Asn435, Asn483, Asn551, Asn615, Asn676, Asn721, Asn825, Asn880, Asn948, Asn1085, Asn1101, Asn1104, Asn1225, Asn1296, Asn1389, and Asn1514 are each glycosylated (N-linked (GlcNAc...) asparagine). N-linked (GlcNAc...) asparagine glycosylation is found at Asn1828, Asn1899, Asn1967, and Asn2119. N-linked (GlcNAc...) asparagine glycosylation is found at Asn2387 and Asn2432. N-linked (GlcNAc...) asparagine glycosylation is found at Asn2923, Asn2939, Asn3038, Asn3142, Asn3219, Asn3394, and Asn3479. N-linked (GlcNAc...) asparagine glycans are attached at residues Asn3708 and Asn3760. In terms of domain architecture, EGF-like 1 spans 3804–3862; sequence DHDPCIHGPCQNGGSCLRRLAVGSALKIQESLPVIIVANEPLQPSQCKCVPGYAGSWCE. Disulfide bonds link Cys3808–Cys3819, Cys3813–Cys3850, Cys3852–Cys3861, Cys3868–Cys3879, Cys3873–Cys3888, Cys3890–Cys3899, Cys3906–Cys3917, Cys3911–Cys3926, Cys3928–Cys3937, Cys3944–Cys3955, Cys3949–Cys3964, and Cys3966–Cys3975. Positions 3864–3900 constitute an EGF-like 2; calcium-binding domain; it reads DIDECLPAPCHNGGTCHNLVGGFSCSCPEGFTGRACE. Residues 3902–3938 form the EGF-like 3; calcium-binding domain; the sequence is DINECLPSPCKHGAVCQNFPGGFNCVCKTGYTGKMCE. Residues 3940 to 3976 form the EGF-like 4 domain; it reads SVNYCECNPCFNGGSCQSGVESYYCHCPFGVFGKHCE. In terms of domain architecture, Laminin G-like 1 spans 3977–4161; it reads LNSYGFEELS…LAAQGILDQC (185 aa). N-linked (GlcNAc...) asparagine glycosylation occurs at Asn4019. 4 disulfide bridges follow: Cys4135–Cys4161, Cys4168–Cys4179, Cys4173–Cys4188, and Cys4190–Cys4199. One can recognise an EGF-like 5 domain in the interval 4164 to 4200; the sequence is LEGTCARNPCQHGGTCVDFWSWQQCQCMEGLTGKYCE. The Laminin G-like 2 domain occupies 4219-4399; that stretch reads YHMSQSEKRE…KTDPSVKIGC (181 aa). N-linked (GlcNAc...) asparagine glycosylation is found at Asn4269 and Asn4314. Intrachain disulfides connect Cys4366–Cys4399, Cys4431–Cys4442, Cys4436–Cys4452, and Cys4454–Cys4463. In terms of domain architecture, EGF-like 6 spans 4427–4464; the sequence is PPGDCASHPCQNGGSCEPGLLSGYTCSCPESHTGRTCE. The helical transmembrane segment at 4506-4526 threads the bilayer; sequence VPAIVGSCATALALLVLSLIL. Residues 4527–4981 are Cytoplasmic-facing; the sequence is CNQCRGKMPK…AKDGEAEQYV (455 aa). 5 disordered regions span residues 4535–4585, 4677–4713, 4753–4773, 4796–4911, and 4957–4981; these read PKNP…PDII, PSSY…KPSA, RRSK…SRLK, RLNT…PAAA, and AAGN…EQYV. The segment covering 4677–4701 has biased composition (polar residues); the sequence is PSSYGQGLRTSSLSHSACPTPNPLS. A necessary and sufficient for interaction with MPDZ region spans residues 4708–4797; that stretch reads FSKPSAFYRN…GLSIEEVERL (90 aa). A compositionally biased stretch (basic and acidic residues) spans 4811–4823; the sequence is DHGRSSSEEDCRR. Ser4878 carries the phosphoserine modification. A compositionally biased stretch (basic and acidic residues) spans 4971–4981; that stretch reads AAKDGEAEQYV.

Heterophilic interaction with DCHS1; this interaction affects their respective protein levels. Interacts (via cytoplasmic domain) with MPDZ. Forms a complex with PALS1 and MPDZ. Widely expressed.

The protein resides in the membrane. Cadherins are cell-cell interaction molecules. FAT4 plays a role in the maintenance of planar cell polarity as well as in inhibition of YAP1-mediated neuroprogenitor cell proliferation and differentiation. The protein is Protocadherin Fat 4 (Fat4) of Mus musculus (Mouse).